The chain runs to 201 residues: Large ribosomal subunit protein uL4 (201 aa).

Positions 45–75 (AQKSRSEVSGSGKKPWRQKGTGRARSGSLRS) are disordered.

It belongs to the universal ribosomal protein uL4 family. Part of the 50S ribosomal subunit.

Functionally, one of the primary rRNA binding proteins, this protein initially binds near the 5'-end of the 23S rRNA. It is important during the early stages of 50S assembly. It makes multiple contacts with different domains of the 23S rRNA in the assembled 50S subunit and ribosome. Its function is as follows. Forms part of the polypeptide exit tunnel. The chain is Large ribosomal subunit protein uL4 from Buchnera aphidicola subsp. Cinara cedri (strain Cc).